Consider the following 97-residue polypeptide: Aspartyl/glutamyl-tRNA(Asn/Gln) amidotransferase subunit C (97 aa).

The protein belongs to the GatC family. As to quaternary structure, heterotrimer of A, B and C subunits.

It carries out the reaction L-glutamyl-tRNA(Gln) + L-glutamine + ATP + H2O = L-glutaminyl-tRNA(Gln) + L-glutamate + ADP + phosphate + H(+). It catalyses the reaction L-aspartyl-tRNA(Asn) + L-glutamine + ATP + H2O = L-asparaginyl-tRNA(Asn) + L-glutamate + ADP + phosphate + 2 H(+). Allows the formation of correctly charged Asn-tRNA(Asn) or Gln-tRNA(Gln) through the transamidation of misacylated Asp-tRNA(Asn) or Glu-tRNA(Gln) in organisms which lack either or both of asparaginyl-tRNA or glutaminyl-tRNA synthetases. The reaction takes place in the presence of glutamine and ATP through an activated phospho-Asp-tRNA(Asn) or phospho-Glu-tRNA(Gln). The polypeptide is Aspartyl/glutamyl-tRNA(Asn/Gln) amidotransferase subunit C (Nostoc punctiforme (strain ATCC 29133 / PCC 73102)).